The sequence spans 219 residues: Ras-related protein Rab-3B (219 aa).

Alanine 2 is subject to N-acetylalanine. GTP contacts are provided by serine 31, serine 32, valine 33, glycine 34, lysine 35, threonine 36, serine 37, proline 49, and serine 53. Threonine 36 serves as a coordination point for Mg(2+). Residues 45–58 (DTFTPAFVSTVGID) carry the Switch 1 motif. Residues threonine 54 and aspartate 77 each contribute to the Mg(2+) site. A Switch 2 motif is present at residues 78–96 (TAGQERYRTITTAYYRGAM). Glycine 80 contacts GTP. Threonine 86 is modified (phosphothreonine). 5 residues coordinate GTP: asparagine 135, lysine 136, aspartate 138, alanine 166, and lysine 167. Residues serine 188 and serine 190 each carry the phosphoserine modification. 2 S-geranylgeranyl cysteine lipidation sites follow: cysteine 217 and cysteine 219. Cysteine 219 carries the cysteine methyl ester modification.

Belongs to the small GTPase superfamily. Rab family. In terms of assembly, interacts with RIMS1, RIMS2, RPH3A and RPH3AL. The GTP-bound form interacts with GAS8/DRC4 (via coiled-coil domains). Interacts with GDI2, CHM and CHML; phosphorylation at Thr-86 disrupts these interactions. Interacts with MADD (via uDENN domain); the GTP-bound form is preferred for interaction. The cofactor is Mg(2+). In terms of processing, phosphorylation of Thr-86 in the switch II region by LRRK2 prevents the association of RAB regulatory proteins, including CHM, CHML and RAB GDP dissociation inhibitor GDI2.

Its subcellular location is the cell membrane. The protein resides in the golgi apparatus. The enzyme catalyses GTP + H2O = GDP + phosphate + H(+). With respect to regulation, regulated by guanine nucleotide exchange factors (GEFs) which promote the exchange of bound GDP for free GTP. Regulated by GTPase activating proteins (GAPs) which increase the GTP hydrolysis activity. Inhibited by GDP dissociation inhibitors (GDIs) which prevent Rab-GDP dissociation. The small GTPases Rab are key regulators of intracellular membrane trafficking, from the formation of transport vesicles to their fusion with membranes. Rabs cycle between an inactive GDP-bound form and an active GTP-bound form that is able to recruit to membranes different sets of downstream effectors directly responsible for vesicle formation, movement, tethering and fusion. In Mesocricetus auratus (Golden hamster), this protein is Ras-related protein Rab-3B (RAB3B).